Reading from the N-terminus, the 245-residue chain is MPDYSYRPTIGRTYVYDNKYYKNLGAVIKNAKRKKHFAEHEIEEATLDPLDNYLVAEDPFLGPGKNQKLTLFKEIRNVKPDTMKLVVGWKGKEFYRETWTRFMEDSFPIVNDQEVMDVFLVVNMRPTRPNRCYKFLAQHALRCDPDYVPHDVIRIVEPSWVGSNNEYRISLAKKGGGCPIMNLHSEYTNSFEQFIDRVIWENFYKPIVYIGTDSAEEEEILLEVSLVFKVKEFAPDAPLFTGPAY.

Residues 32–35 (KRKK) form a nuclear localization signal region.

It belongs to the polyhedrin family.

The protein localises to the host nucleus. Functionally, major component of the virus occlusion bodies which are large proteinaceous structures termed polyhedra. These structures serve as the protective package for the virus particles outside the infected host and allow natural transmission of virus between insect hosts, assisting persistence in the environment. Forms the paracrystalline lattice of polyhedra and interacts with enveloped virions as well as other accessory molecules and structures to form a mature viral occlusion body. The sequence is that of Polyhedrin (PH) from Lepidoptera (butterflies and moths).